The primary structure comprises 134 residues: Profilin-2 (134 aa).

An intrachain disulfide couples C13 to C118. The Involved in PIP2 interaction signature appears at 84–100 (AVIRGKKGSGGITIKKT). Residue T114 is modified to Phosphothreonine.

The protein belongs to the profilin family. In terms of assembly, occurs in many kinds of cells as a complex with monomeric actin in a 1:1 ratio. Post-translationally, phosphorylated by MAP kinases.

It localises to the cytoplasm. The protein resides in the cytoskeleton. Its function is as follows. Binds to actin and affects the structure of the cytoskeleton. At high concentrations, profilin prevents the polymerization of actin, whereas it enhances it at low concentrations. The polypeptide is Profilin-2 (Olea europaea (Common olive)).